A 262-amino-acid polypeptide reads, in one-letter code: 3-methyl-2-oxobutanoate hydroxymethyltransferase (262 aa).

Residues D31 and D70 each contribute to the Mg(2+) site. Residues 31–32 (DS), D70, and K99 contribute to the 3-methyl-2-oxobutanoate site. E101 is a Mg(2+) binding site. The active-site Proton acceptor is E168.

It belongs to the PanB family. In terms of assembly, homodecamer; pentamer of dimers. The cofactor is Mg(2+).

The protein resides in the cytoplasm. The enzyme catalyses 3-methyl-2-oxobutanoate + (6R)-5,10-methylene-5,6,7,8-tetrahydrofolate + H2O = 2-dehydropantoate + (6S)-5,6,7,8-tetrahydrofolate. The protein operates within cofactor biosynthesis; coenzyme A biosynthesis. Its function is as follows. Catalyzes the reversible reaction in which hydroxymethyl group from 5,10-methylenetetrahydrofolate is transferred onto alpha-ketoisovalerate to form ketopantoate. This Cenarchaeum symbiosum (strain A) protein is 3-methyl-2-oxobutanoate hydroxymethyltransferase.